The sequence spans 35 residues: Photosystem II reaction center protein Psb30 (35 aa).

A helical transmembrane segment spans residues 7–27 (LIANFGALALITLAGPAVIFI).

It belongs to the Psb30/Ycf12 family. PSII is composed of 1 copy each of membrane proteins PsbA, PsbB, PsbC, PsbD, PsbE, PsbF, PsbH, PsbI, PsbJ, PsbK, PsbL, PsbM, PsbT, PsbX, PsbY, PsbZ, Psb30/Ycf12, peripheral proteins PsbO, CyanoQ (PsbQ), PsbU, PsbV and a large number of cofactors. It forms dimeric complexes.

The protein resides in the cellular thylakoid membrane. Functionally, a core subunit of photosystem II (PSII), probably helps stabilize the reaction center. The protein is Photosystem II reaction center protein Psb30 of Synechococcus sp. (strain CC9311).